A 502-amino-acid chain; its full sequence is MTEKKYIVALDQGTTSSRAVVMDHDANIVSVSQREFEQIYPKAGWVEHDPMEIWATQSSTLVEVLAKADISSDQIAAIGITNQRETTIVWERETGKPIYNAIVWQCRRTAEICERLKRDGMEDYIRNNTGLVIDPYFSGTKVKWILDHVEGSRERARRGELLFGTVDTWLIWKMTQGRVHVTDYTNASRTMLFNIHTLDWDDKMLDALDIPRAMLPEVRRSSEVYGQTNIGGKGGTRIPIAGIAGDQQAALFGQLCVKEGMAKNTYGTGCFMLMNTGEKAVKSENGLLTTIACGPTGEVNYALEGAVFMAGASIQWLRDEMKLISDAFDSEYFATKVKDTNGVYVVPAFTGLGAPYWDPYARGAIFGLTRGVNSNHIIRATLESIAYQTRDVLEAMQADSGIRLHALRVDGGAVANNFLMQFQSDILGTRVERPEVREVTALGAAYLAGLAVGYWQNLDELQEKAVIEREFRPGIETTERNFRYSGWKKAVKRALAWEDHEE.

Threonine 14 provides a ligand contact to ADP. Residues threonine 14, threonine 15, and serine 16 each contribute to the ATP site. Threonine 14 is a binding site for sn-glycerol 3-phosphate. Residue arginine 18 coordinates ADP. Sn-glycerol 3-phosphate contacts are provided by arginine 84, glutamate 85, tyrosine 136, and aspartate 246. Glycerol-binding residues include arginine 84, glutamate 85, tyrosine 136, aspartate 246, and glutamine 247. Threonine 268 and glycine 311 together coordinate ADP. ATP-binding residues include threonine 268, glycine 311, glutamine 315, and glycine 412. Residues glycine 412 and asparagine 416 each contribute to the ADP site.

This sequence belongs to the FGGY kinase family. As to quaternary structure, homotetramer and homodimer (in equilibrium). Heterodimer with EIIA-Glc. Binds 1 zinc ion per glycerol kinase EIIA-Glc dimer. The zinc ion is important for dimerization.

It carries out the reaction glycerol + ATP = sn-glycerol 3-phosphate + ADP + H(+). It participates in polyol metabolism; glycerol degradation via glycerol kinase pathway; sn-glycerol 3-phosphate from glycerol: step 1/1. Its activity is regulated as follows. Activity of this regulatory enzyme is affected by several metabolites. Allosterically and non-competitively inhibited by fructose 1,6-bisphosphate (FBP) and unphosphorylated phosphocarrier protein EIIA-Glc (III-Glc), an integral component of the bacterial phosphotransferase (PTS) system. Key enzyme in the regulation of glycerol uptake and metabolism. Catalyzes the phosphorylation of glycerol to yield sn-glycerol 3-phosphate. The chain is Glycerol kinase from Citrobacter koseri (strain ATCC BAA-895 / CDC 4225-83 / SGSC4696).